Reading from the N-terminus, the 378-residue chain is Alanine racemase (378 aa).

K35 (proton acceptor; specific for D-alanine) is an active-site residue. An N6-(pyridoxal phosphate)lysine modification is found at K35. R133 contributes to the substrate binding site. Residue Y266 is the Proton acceptor; specific for L-alanine of the active site. M314 is a substrate binding site.

It belongs to the alanine racemase family. Pyridoxal 5'-phosphate is required as a cofactor.

The catalysed reaction is L-alanine = D-alanine. Its pathway is amino-acid biosynthesis; D-alanine biosynthesis; D-alanine from L-alanine: step 1/1. Functionally, catalyzes the interconversion of L-alanine and D-alanine. May also act on other amino acids. The protein is Alanine racemase (alr) of Beutenbergia cavernae (strain ATCC BAA-8 / DSM 12333 / CCUG 43141 / JCM 11478 / NBRC 16432 / NCIMB 13614 / HKI 0122).